We begin with the raw amino-acid sequence, 158 residues long: Glutathione peroxidase homolog BsaA (158 aa).

Residue Cys-36 is part of the active site.

Belongs to the glutathione peroxidase family.

This is Glutathione peroxidase homolog BsaA (bsaA) from Staphylococcus aureus (strain COL).